Here is a 258-residue protein sequence, read N- to C-terminus: Imidazole glycerol phosphate synthase subunit HisF (258 aa).

Residues Asp-11 and Asp-130 contribute to the active site.

Belongs to the HisA/HisF family. As to quaternary structure, heterodimer of HisH and HisF.

The protein localises to the cytoplasm. It carries out the reaction 5-[(5-phospho-1-deoxy-D-ribulos-1-ylimino)methylamino]-1-(5-phospho-beta-D-ribosyl)imidazole-4-carboxamide + L-glutamine = D-erythro-1-(imidazol-4-yl)glycerol 3-phosphate + 5-amino-1-(5-phospho-beta-D-ribosyl)imidazole-4-carboxamide + L-glutamate + H(+). It participates in amino-acid biosynthesis; L-histidine biosynthesis; L-histidine from 5-phospho-alpha-D-ribose 1-diphosphate: step 5/9. Functionally, IGPS catalyzes the conversion of PRFAR and glutamine to IGP, AICAR and glutamate. The HisF subunit catalyzes the cyclization activity that produces IGP and AICAR from PRFAR using the ammonia provided by the HisH subunit. The polypeptide is Imidazole glycerol phosphate synthase subunit HisF (Lachnoclostridium phytofermentans (strain ATCC 700394 / DSM 18823 / ISDg) (Clostridium phytofermentans)).